We begin with the raw amino-acid sequence, 334 residues long: Holliday junction branch migration complex subunit RuvB (334 aa).

Residues 4 to 184 (ADRLIQPQLQ…FGIPLRLEFY (181 aa)) form a large ATPase domain (RuvB-L) region. ATP is bound by residues arginine 24, glycine 65, lysine 68, threonine 69, threonine 70, 131 to 133 (EDY), arginine 174, tyrosine 184, and arginine 221. Threonine 69 is a binding site for Mg(2+). The small ATPAse domain (RuvB-S) stretch occupies residues 185 to 255 (NVKDLSTIVT…VAEHALDLLD (71 aa)). The segment at 258-334 (GEGFDYMDRK…YLHFGMIKPE (77 aa)) is head domain (RuvB-H). Arginine 294, arginine 313, and arginine 318 together coordinate DNA.

Belongs to the RuvB family. As to quaternary structure, homohexamer. Forms an RuvA(8)-RuvB(12)-Holliday junction (HJ) complex. HJ DNA is sandwiched between 2 RuvA tetramers; dsDNA enters through RuvA and exits via RuvB. An RuvB hexamer assembles on each DNA strand where it exits the tetramer. Each RuvB hexamer is contacted by two RuvA subunits (via domain III) on 2 adjacent RuvB subunits; this complex drives branch migration. In the full resolvosome a probable DNA-RuvA(4)-RuvB(12)-RuvC(2) complex forms which resolves the HJ.

The protein resides in the cytoplasm. It catalyses the reaction ATP + H2O = ADP + phosphate + H(+). Functionally, the RuvA-RuvB-RuvC complex processes Holliday junction (HJ) DNA during genetic recombination and DNA repair, while the RuvA-RuvB complex plays an important role in the rescue of blocked DNA replication forks via replication fork reversal (RFR). RuvA specifically binds to HJ cruciform DNA, conferring on it an open structure. The RuvB hexamer acts as an ATP-dependent pump, pulling dsDNA into and through the RuvAB complex. RuvB forms 2 homohexamers on either side of HJ DNA bound by 1 or 2 RuvA tetramers; 4 subunits per hexamer contact DNA at a time. Coordinated motions by a converter formed by DNA-disengaged RuvB subunits stimulates ATP hydrolysis and nucleotide exchange. Immobilization of the converter enables RuvB to convert the ATP-contained energy into a lever motion, pulling 2 nucleotides of DNA out of the RuvA tetramer per ATP hydrolyzed, thus driving DNA branch migration. The RuvB motors rotate together with the DNA substrate, which together with the progressing nucleotide cycle form the mechanistic basis for DNA recombination by continuous HJ branch migration. Branch migration allows RuvC to scan DNA until it finds its consensus sequence, where it cleaves and resolves cruciform DNA. This chain is Holliday junction branch migration complex subunit RuvB, found in Shewanella sp. (strain MR-4).